The primary structure comprises 842 residues: Outer membrane usher protein LpfC (842 aa).

Positions 1–21 (MTWTHLPLGNKTSRFTQSALA) are cleaved as a signal peptide. C819 and C841 are oxidised to a cystine.

Belongs to the fimbrial export usher family.

The protein localises to the cell outer membrane. Functionally, involved in the export and assembly of LpfA fimbrial subunits across the outer membrane. This Salmonella typhimurium (strain LT2 / SGSC1412 / ATCC 700720) protein is Outer membrane usher protein LpfC (lpfC).